The chain runs to 555 residues: Chaperonin GroEL (555 aa).

ATP is bound by residues 29–32 (TLGP), K50, 86–90 (DGTTT), G418, and D499. The tract at residues 528–555 (HEEDNNTGNRSGGGVGGGHHGGMGGMDF) is disordered. Residues 537-555 (RSGGGVGGGHHGGMGGMDF) show a composition bias toward gly residues.

Belongs to the chaperonin (HSP60) family. As to quaternary structure, forms a cylinder of 14 subunits composed of two heptameric rings stacked back-to-back. Interacts with the co-chaperonin GroES.

The protein resides in the cytoplasm. It carries out the reaction ATP + H2O + a folded polypeptide = ADP + phosphate + an unfolded polypeptide.. Functionally, together with its co-chaperonin GroES, plays an essential role in assisting protein folding. The GroEL-GroES system forms a nano-cage that allows encapsulation of the non-native substrate proteins and provides a physical environment optimized to promote and accelerate protein folding. The sequence is that of Chaperonin GroEL from Orientia tsutsugamushi (Rickettsia tsutsugamushi).